A 482-amino-acid polypeptide reads, in one-letter code: Zinc metalloproteinase/disintegrin (482 aa).

Residues 1–20 (MIQVLLVTICLAAFPYQGSS) form the signal peptide. Positions 21–189 (MILESGNVND…IKASQLVVTA (169 aa)) are excised as a propeptide. One can recognise a Peptidase M12B domain in the interval 197–393 (RYIELVVVAD…HNPQCILNEP (197 aa)). The Ca(2+) site is built by Glu200 and Asp284. Disulfide bonds link Cys308/Cys388 and Cys348/Cys372. His333 contacts Zn(2+). Residue Glu334 is part of the active site. Zn(2+) is bound by residues His337 and His343. Residues Cys388 and Asn391 each coordinate Ca(2+). Positions 394-409 (LRTDTVSTPVSGNELL) are excised as a propeptide. The 82-residue stretch at 401-482 (TPVSGNELLE…AGCPRNPFHA (82 aa)) folds into the Disintegrin domain. Intrachain disulfides connect Cys415-Cys430, Cys417-Cys425, Cys424-Cys447, Cys438-Cys444, Cys443-Cys468, and Cys456-Cys475. The Cell attachment site motif lies at 460-462 (RGD).

This sequence belongs to the venom metalloproteinase (M12B) family. P-II subfamily. P-IId sub-subfamily. In terms of assembly, homodimer; disulfide-linked (disintegrin). It depends on Zn(2+) as a cofactor. Expressed by the venom gland.

It localises to the secreted. Functionally, this recombinant protein hydrolyzes fibronectin, but has no effect on type I gelatin and type I to V collagens. Selectively hydrolyzes the Aalpha-chain of fibrinogen (FGA), but has no effect on fibrin. Inhibits ADP-induced platelet aggregation. In terms of biological role, recombinant metalloproteinase-disintegrin Mt-d-I (393-408): hydrolyzes type I gelatin, type III and V collagens, but has no effect on type I, II, IV collagens and fibronectin. Selectively hydrolyzes the Aalpha-chain of fibrinogen, but has no effect on fibrin. May induce hemorrhage in vascular tissue. Strongly inhibits ADP-induced platelet aggregation. When concentrated, Mt-d-I undergoes autoproteolytic processing into metalloproteinase and disintegrin. The protein is Zinc metalloproteinase/disintegrin of Gloydius brevicauda (Korean slamosa snake).